The following is a 321-amino-acid chain: Gibberellin 2-beta-dioxygenase 4 (321 aa).

In terms of domain architecture, Fe2OG dioxygenase spans 156–269; sequence DSDSVLRVNH…RLSTAYFAGP (114 aa). Residues His193, Asp195, and His250 each coordinate Fe cation. Residue Arg260 is part of the active site.

The protein belongs to the iron/ascorbate-dependent oxidoreductase family. GA2OX subfamily. The cofactor is Fe(2+). In terms of tissue distribution, expressed at the base of the shoot apical meristem and developing leaf primordia.

The enzyme catalyses gibberellin A1 + 2-oxoglutarate + O2 = gibberellin A8 + succinate + CO2. Its pathway is plant hormone biosynthesis; gibberellin biosynthesis. Catalyzes the 2-beta-hydroxylation of several biologically active gibberellins, leading to the homeostatic regulation of their endogenous level. Catabolism of gibberellins (GAs) plays a central role in plant development. Converts GA9/GA20 to GA51/GA29 and GA4/GA1 to GA34/GA8. The polypeptide is Gibberellin 2-beta-dioxygenase 4 (GA2OX4) (Arabidopsis thaliana (Mouse-ear cress)).